The primary structure comprises 245 residues: 1-(5-phosphoribosyl)-5-[(5-phosphoribosylamino)methylideneamino] imidazole-4-carboxamide isomerase (245 aa).

Asp11 serves as the catalytic Proton acceptor. The active-site Proton donor is the Asp132.

It belongs to the HisA/HisF family.

It is found in the cytoplasm. The enzyme catalyses 1-(5-phospho-beta-D-ribosyl)-5-[(5-phospho-beta-D-ribosylamino)methylideneamino]imidazole-4-carboxamide = 5-[(5-phospho-1-deoxy-D-ribulos-1-ylimino)methylamino]-1-(5-phospho-beta-D-ribosyl)imidazole-4-carboxamide. It participates in amino-acid biosynthesis; L-histidine biosynthesis; L-histidine from 5-phospho-alpha-D-ribose 1-diphosphate: step 4/9. The protein is 1-(5-phosphoribosyl)-5-[(5-phosphoribosylamino)methylideneamino] imidazole-4-carboxamide isomerase of Geobacillus thermodenitrificans (strain NG80-2).